A 194-amino-acid chain; its full sequence is Adenylate kinase (194 aa).

Position 8–16 (Gly8–Thr16) interacts with ATP.

It belongs to the archaeal adenylate kinase family. As to quaternary structure, homotrimer.

Its subcellular location is the cytoplasm. The catalysed reaction is AMP + ATP = 2 ADP. This chain is Adenylate kinase (adkA), found in Sulfolobus acidocaldarius (strain ATCC 33909 / DSM 639 / JCM 8929 / NBRC 15157 / NCIMB 11770).